The chain runs to 158 residues: 6,7-dimethyl-8-ribityllumazine synthase (158 aa).

Residues F22, 56–58, and 80–82 contribute to the 5-amino-6-(D-ribitylamino)uracil site; these read ALE and VVI. 85-86 contributes to the (2S)-2-hydroxy-3-oxobutyl phosphate binding site; that stretch reads ET. The active-site Proton donor is H88. 5-amino-6-(D-ribitylamino)uracil is bound at residue N113. (2S)-2-hydroxy-3-oxobutyl phosphate is bound at residue R127.

It belongs to the DMRL synthase family.

The catalysed reaction is (2S)-2-hydroxy-3-oxobutyl phosphate + 5-amino-6-(D-ribitylamino)uracil = 6,7-dimethyl-8-(1-D-ribityl)lumazine + phosphate + 2 H2O + H(+). The protein operates within cofactor biosynthesis; riboflavin biosynthesis; riboflavin from 2-hydroxy-3-oxobutyl phosphate and 5-amino-6-(D-ribitylamino)uracil: step 1/2. Functionally, catalyzes the formation of 6,7-dimethyl-8-ribityllumazine by condensation of 5-amino-6-(D-ribitylamino)uracil with 3,4-dihydroxy-2-butanone 4-phosphate. This is the penultimate step in the biosynthesis of riboflavin. This is 6,7-dimethyl-8-ribityllumazine synthase from Neisseria meningitidis serogroup C (strain 053442).